We begin with the raw amino-acid sequence, 446 residues long: Methylenetetrahydrofolate--tRNA-(uracil-5-)-methyltransferase TrmFO (446 aa).

8 to 13 (GGGLAG) lines the FAD pocket.

This sequence belongs to the MnmG family. TrmFO subfamily. Requires FAD as cofactor.

The protein resides in the cytoplasm. It catalyses the reaction uridine(54) in tRNA + (6R)-5,10-methylene-5,6,7,8-tetrahydrofolate + NADH + H(+) = 5-methyluridine(54) in tRNA + (6S)-5,6,7,8-tetrahydrofolate + NAD(+). The enzyme catalyses uridine(54) in tRNA + (6R)-5,10-methylene-5,6,7,8-tetrahydrofolate + NADPH + H(+) = 5-methyluridine(54) in tRNA + (6S)-5,6,7,8-tetrahydrofolate + NADP(+). Its function is as follows. Catalyzes the folate-dependent formation of 5-methyl-uridine at position 54 (M-5-U54) in all tRNAs. This Zymomonas mobilis subsp. mobilis (strain ATCC 31821 / ZM4 / CP4) protein is Methylenetetrahydrofolate--tRNA-(uracil-5-)-methyltransferase TrmFO.